An 81-amino-acid chain; its full sequence is Large ribosomal subunit protein bL31 (81 aa).

Zn(2+) is bound by residues C16, C18, C38, and C41.

This sequence belongs to the bacterial ribosomal protein bL31 family. Type A subfamily. In terms of assembly, part of the 50S ribosomal subunit. Requires Zn(2+) as cofactor.

Binds the 23S rRNA. This is Large ribosomal subunit protein bL31 from Mycobacterium marinum (strain ATCC BAA-535 / M).